We begin with the raw amino-acid sequence, 549 residues long: Cation/acetate symporter ActP (549 aa).

13 helical membrane-spanning segments follow: residues 33 to 53 (WQAI…TYWA), 77 to 97 (LAIA…ALVF), 103 to 123 (GLIY…LIAE), 148 to 168 (ILSA…QMVG), 183 to 203 (IAVV…GMLA), 206 to 226 (WVQI…AFMV), 262 to 282 (ISAL…PHIL), 303 to 323 (GFMG…IMLV), 355 to 375 (LFLG…VAGL), 404 to 424 (VSKI…VLFE), 428 to 448 (IAFM…PIIL), 464 to 484 (GGWL…TIWV), and 493 to 513 (IFPY…GIWF).

This sequence belongs to the sodium:solute symporter (SSF) (TC 2.A.21) family.

The protein resides in the cell inner membrane. In terms of biological role, transports acetate. The polypeptide is Cation/acetate symporter ActP (Escherichia coli (strain ATCC 8739 / DSM 1576 / NBRC 3972 / NCIMB 8545 / WDCM 00012 / Crooks)).